Consider the following 77-residue polypeptide: Large ribosomal subunit protein bL31 (77 aa).

It belongs to the bacterial ribosomal protein bL31 family. Type A subfamily. As to quaternary structure, part of the 50S ribosomal subunit.

Functionally, binds the 23S rRNA. In Paramagnetospirillum magneticum (strain ATCC 700264 / AMB-1) (Magnetospirillum magneticum), this protein is Large ribosomal subunit protein bL31.